A 306-amino-acid chain; its full sequence is Glutaminase (306 aa).

Substrate is bound by residues Ser66, Asn116, Glu159, Asn166, Tyr190, Tyr242, and Val260.

It belongs to the glutaminase family. Homotetramer.

The enzyme catalyses L-glutamine + H2O = L-glutamate + NH4(+). The protein is Glutaminase of Caulobacter vibrioides (strain ATCC 19089 / CIP 103742 / CB 15) (Caulobacter crescentus).